An 845-amino-acid polypeptide reads, in one-letter code: Beta-mannosidase B (845 aa).

N252 carries N-linked (GlcNAc...) asparagine glycosylation. The Proton donor role is filled by E432. 2 N-linked (GlcNAc...) asparagine glycosylation sites follow: N717 and N723.

It belongs to the glycosyl hydrolase 2 family. Beta-mannosidase B subfamily.

The enzyme catalyses Hydrolysis of terminal, non-reducing beta-D-mannose residues in beta-D-mannosides.. It functions in the pathway glycan metabolism; N-glycan degradation. In terms of biological role, exoglycosidase that cleaves the single beta-linked mannose residue from the non-reducing end of beta-mannosidic oligosaccharides of various complexity and length. Prefers mannobiose over mannotriose and has no activity against polymeric mannan. Is also severely restricted by galactosyl substitutions at the +1 subsite. This is Beta-mannosidase B (mndB) from Aspergillus fumigatus (strain ATCC MYA-4609 / CBS 101355 / FGSC A1100 / Af293) (Neosartorya fumigata).